The chain runs to 93 residues: Large ribosomal subunit protein uL23cz/uL23cy (93 aa).

Belongs to the universal ribosomal protein uL23 family. As to quaternary structure, part of the 50S ribosomal subunit.

The protein resides in the plastid. Its subcellular location is the chloroplast. In terms of biological role, binds to 23S rRNA. This is Large ribosomal subunit protein uL23cz/uL23cy (rpl23-A) from Eucalyptus globulus subsp. globulus (Tasmanian blue gum).